Consider the following 384-residue polypeptide: Actin-related protein 2/3 complex subunit 1 (384 aa).

WD repeat units follow at residues 61–99 (DHDK…TYKP), 105–146 (RINR…WVSK), 151–190 (PIKS…LDSK), 212–251 (YQGS…QSVN), and 349–383 (AHEN…VIYT).

Belongs to the WD repeat ARPC1 family. In terms of assembly, component of the Arp2/3 complex composed of ARP2, ARP3, ARC40/p41-ARC, ARC35/p34-ARC, ARC18/p21-ARC, ARC19/p20-ARC and ARC16/p16-ARC.

The protein localises to the cytoplasm. The protein resides in the cytoskeleton. It is found in the actin patch. Functions as a component of the Arp2/3 complex which is involved in regulation of actin polymerization and together with an activating nucleation-promoting factor (NPF) mediates the formation of branched actin networks. The polypeptide is Actin-related protein 2/3 complex subunit 1 (ARC40) (Saccharomyces cerevisiae (strain ATCC 204508 / S288c) (Baker's yeast)).